We begin with the raw amino-acid sequence, 221 residues long: Urease accessory protein UreE (221 aa).

Residues 171–180 (HHGHDHDHGH) are compositionally biased toward basic and acidic residues. The tract at residues 171–221 (HHGHDHDHGHSHSHSHSHSHSHSHSHDHDHDHDHEHDVKGHVHGPGCGHKH) is disordered. Residues 181 to 193 (SHSHSHSHSHSHS) show a composition bias toward basic residues. A compositionally biased stretch (basic and acidic residues) spans 194-210 (HSHDHDHDHDHEHDVKG).

The protein belongs to the UreE family.

The protein resides in the cytoplasm. In terms of biological role, involved in urease metallocenter assembly. Binds nickel. Probably functions as a nickel donor during metallocenter assembly. The protein is Urease accessory protein UreE of Cupriavidus pinatubonensis (strain JMP 134 / LMG 1197) (Cupriavidus necator (strain JMP 134)).